We begin with the raw amino-acid sequence, 117 residues long: Large ribosomal subunit protein bL17 (117 aa).

It belongs to the bacterial ribosomal protein bL17 family. In terms of assembly, part of the 50S ribosomal subunit. Contacts protein L32.

The chain is Large ribosomal subunit protein bL17 from Neorickettsia sennetsu (strain ATCC VR-367 / Miyayama) (Ehrlichia sennetsu).